Reading from the N-terminus, the 144-residue chain is Large ribosomal subunit protein uL16 (144 aa).

Positions M1–A17 are enriched in basic residues. Residues M1–Q22 are disordered.

This sequence belongs to the universal ribosomal protein uL16 family. Part of the 50S ribosomal subunit.

Binds 23S rRNA and is also seen to make contacts with the A and possibly P site tRNAs. This is Large ribosomal subunit protein uL16 from Bacteroides thetaiotaomicron (strain ATCC 29148 / DSM 2079 / JCM 5827 / CCUG 10774 / NCTC 10582 / VPI-5482 / E50).